A 667-amino-acid chain; its full sequence is Polypeptide N-acetylgalactosaminyltransferase 3 (667 aa).

Residues 1–12 (MGLRFQQLKKLW) are Cytoplasmic-facing. A helical; Signal-anchor for type II membrane protein membrane pass occupies residues 13-35 (LLYLFLLFFAFFMFAISINLYVA). Residues 36–667 (SIQGGDAEMR…WGFIPLPWRM (632 aa)) lie on the Lumenal side of the membrane. Residues Asn-75 and Asn-129 are each glycosylated (N-linked (GlcNAc...) asparagine). Cystine bridges form between Cys-140-Cys-375, Cys-366-Cys-446, Cys-526-Cys-547, Cys-572-Cys-601, and Cys-626-Cys-649. The tract at residues 149–259 (LPSTSVIIVF…RGWLEPLLSR (111 aa)) is catalytic subdomain A. Asp-190 and Arg-220 together coordinate substrate. Residues Asp-243 and His-245 each coordinate Mn(2+). N-linked (GlcNAc...) asparagine glycans are attached at residues Asn-279 and Asn-313. Residues 321–383 (PIATPGMAGG…PCSHVGHVFR (63 aa)) form a catalytic subdomain B region. Trp-352 is a substrate binding site. Residue His-380 participates in Mn(2+) binding. Positions 383 and 388 each coordinate substrate. Residue Asn-433 is glycosylated (N-linked (GlcNAc...) asparagine). A Ricin B-type lectin domain is found at 513-661 (EELMALIDLE…KDITQKWGFI (149 aa)). Asn-590 carries N-linked (GlcNAc...) asparagine glycosylation.

The protein belongs to the glycosyltransferase 2 family. GalNAc-T subfamily. The cofactor is Mn(2+). As to expression, expressed in developing oocytes and egg chambers. During embryonic stages 9-11, expressed in the primordiums of the foregut, midgut and hindgut. During embryonic stages 12-13, expression is found uniquely in the posterior spiracle. During embryonic stages 14-17, expressed in the pharynx, esophagus and posterior spiracles. Expression observed in the epidermis during embryonic stages 16-17. In third instar larvae, expressed ubiquitously in wing, with increased expression in pleura and notum, eye-antennal, leg and haltere imaginal disks.

The protein localises to the golgi apparatus membrane. It carries out the reaction L-seryl-[protein] + UDP-N-acetyl-alpha-D-galactosamine = a 3-O-[N-acetyl-alpha-D-galactosaminyl]-L-seryl-[protein] + UDP + H(+). It catalyses the reaction L-threonyl-[protein] + UDP-N-acetyl-alpha-D-galactosamine = a 3-O-[N-acetyl-alpha-D-galactosaminyl]-L-threonyl-[protein] + UDP + H(+). Its pathway is protein modification; protein glycosylation. Catalyzes the initial reaction in O-linked oligosaccharide biosynthesis, the transfer of an N-acetyl-D-galactosamine residue to a serine or threonine residue on the protein receptor. It can both act as a peptide transferase that transfers GalNAc onto unmodified peptide substrates, and as a glycopeptide transferase that requires the prior addition of a GalNAc on a peptide before adding additional GalNAc moieties. Prefers EA2 as substrate. Has weak activity toward Muc5AC-3, -13 and -3/13 substrates. Plays a critical role in the regulation of integrin-mediated cell adhesion during wing development by influencing, via glycosylation, the secretion and localization of the integrin ligand Tig to the basal cell layer interface. Might have a role in protein O-glycosylation in the Golgi and thereby in establishing and/or maintaining a proper secretory apparatus structure. Together with Pgant35A, regulates integrin levels and activity-dependent integrin signaling at the synapse in neurons and muscles. This chain is Polypeptide N-acetylgalactosaminyltransferase 3, found in Drosophila melanogaster (Fruit fly).